The following is a 512-amino-acid chain: UDP-N-acetylmuramate--L-alanine ligase (512 aa).

G132–T138 is a binding site for ATP.

It belongs to the MurCDEF family.

It localises to the cytoplasm. It catalyses the reaction UDP-N-acetyl-alpha-D-muramate + L-alanine + ATP = UDP-N-acetyl-alpha-D-muramoyl-L-alanine + ADP + phosphate + H(+). It functions in the pathway cell wall biogenesis; peptidoglycan biosynthesis. In terms of biological role, cell wall formation. This Bifidobacterium longum (strain DJO10A) protein is UDP-N-acetylmuramate--L-alanine ligase.